A 729-amino-acid chain; its full sequence is DNA topoisomerase 3 (729 aa).

Residues 3-136 enclose the Toprim domain; the sequence is KSVVIAEKPS…IKRLWISSVT (134 aa). Positions 9 and 105 each coordinate Mg(2+). Positions 153–594 constitute a Topo IA-type catalytic domain; it reads YDNLYASAVA…EMKNYTKEIV (442 aa). The interaction with DNA stretch occupies residues 187–192; sequence NCGRVQ. Tyr-310 (O-(5'-phospho-DNA)-tyrosine intermediate) is an active-site residue. Positions 686 to 713 are enriched in basic and acidic residues; the sequence is ERRKKESGNKADKRDVQKYMKQQKKEEE. A disordered region spans residues 686–718; sequence ERRKKESGNKADKRDVQKYMKQQKKEEEPLNNP.

It belongs to the type IA topoisomerase family. Mg(2+) serves as cofactor.

The enzyme catalyses ATP-independent breakage of single-stranded DNA, followed by passage and rejoining.. In terms of biological role, releases the supercoiling and torsional tension of DNA, which is introduced during the DNA replication and transcription, by transiently cleaving and rejoining one strand of the DNA duplex. Introduces a single-strand break via transesterification at a target site in duplex DNA. The scissile phosphodiester is attacked by the catalytic tyrosine of the enzyme, resulting in the formation of a DNA-(5'-phosphotyrosyl)-enzyme intermediate and the expulsion of a 3'-OH DNA strand. The free DNA strand then undergoes passage around the unbroken strand, thus removing DNA supercoils. Finally, in the religation step, the DNA 3'-OH attacks the covalent intermediate to expel the active-site tyrosine and restore the DNA phosphodiester backbone. The sequence is that of DNA topoisomerase 3 from Bacillus cereus (strain ZK / E33L).